The chain runs to 120 residues: Immunogenic miracidial antigen 5D (120 aa).

A disordered region spans residues 41–120; that stretch reads HIDVGDEDYH…PKKYGSGYKH (80 aa). Acidic residues predominate over residues 45–66; that stretch reads GDEDYHDGDDDVDYTDDVDDVD.

The protein belongs to the immunogenic miracidial antigen family.

The sequence is that of Immunogenic miracidial antigen 5D (5D) from Schistosoma japonicum (Blood fluke).